Reading from the N-terminus, the 323-residue chain is Lipoyl synthase (323 aa).

Positions 61, 66, 72, 87, 91, 94, and 300 each coordinate [4Fe-4S] cluster. The 217-residue stretch at 73-289 (WDKKHATFMI…ETVAYSKGFL (217 aa)) folds into the Radical SAM core domain.

It belongs to the radical SAM superfamily. Lipoyl synthase family. Requires [4Fe-4S] cluster as cofactor.

The protein resides in the cytoplasm. It carries out the reaction [[Fe-S] cluster scaffold protein carrying a second [4Fe-4S](2+) cluster] + N(6)-octanoyl-L-lysyl-[protein] + 2 oxidized [2Fe-2S]-[ferredoxin] + 2 S-adenosyl-L-methionine + 4 H(+) = [[Fe-S] cluster scaffold protein] + N(6)-[(R)-dihydrolipoyl]-L-lysyl-[protein] + 4 Fe(3+) + 2 hydrogen sulfide + 2 5'-deoxyadenosine + 2 L-methionine + 2 reduced [2Fe-2S]-[ferredoxin]. It participates in protein modification; protein lipoylation via endogenous pathway; protein N(6)-(lipoyl)lysine from octanoyl-[acyl-carrier-protein]: step 2/2. Its function is as follows. Catalyzes the radical-mediated insertion of two sulfur atoms into the C-6 and C-8 positions of the octanoyl moiety bound to the lipoyl domains of lipoate-dependent enzymes, thereby converting the octanoylated domains into lipoylated derivatives. The polypeptide is Lipoyl synthase (Rhizobium etli (strain ATCC 51251 / DSM 11541 / JCM 21823 / NBRC 15573 / CFN 42)).